Here is a 103-residue protein sequence, read N- to C-terminus: Large ribosomal subunit protein bL21 (103 aa).

This sequence belongs to the bacterial ribosomal protein bL21 family. In terms of assembly, part of the 50S ribosomal subunit. Contacts protein L20.

Functionally, this protein binds to 23S rRNA in the presence of protein L20. This chain is Large ribosomal subunit protein bL21, found in Pseudomonas aeruginosa (strain LESB58).